The primary structure comprises 192 residues: Zinc finger CCHC domain-containing protein 10 (192 aa).

The CCHC-type zinc finger occupies 43–60 (VRCQKCLEFGHWTYECTG). A disordered region spans residues 89-192 (QSIGETNVER…DEPPKKKKKK (104 aa)). Low complexity-rich tracts occupy residues 109-136 (TSSS…SSSS) and 144-179 (SSSS…STDS).

This Homo sapiens (Human) protein is Zinc finger CCHC domain-containing protein 10 (ZCCHC10).